The primary structure comprises 445 residues: Phosphoglucosamine mutase (445 aa).

Residue Ser102 is the Phosphoserine intermediate of the active site. Mg(2+) contacts are provided by Ser102, Asp241, Asp243, and Asp245. Ser102 carries the post-translational modification Phosphoserine.

Belongs to the phosphohexose mutase family. Mg(2+) serves as cofactor. Activated by phosphorylation.

It catalyses the reaction alpha-D-glucosamine 1-phosphate = D-glucosamine 6-phosphate. In terms of biological role, catalyzes the conversion of glucosamine-6-phosphate to glucosamine-1-phosphate. In Salmonella paratyphi A (strain ATCC 9150 / SARB42), this protein is Phosphoglucosamine mutase.